The primary structure comprises 99 residues: Malonate decarboxylase acyl carrier protein (99 aa).

The residue at position 25 (Ser-25) is an O-(phosphoribosyl dephospho-coenzyme A)serine.

This sequence belongs to the MdcC family. Post-translationally, covalently binds the prosthetic group of malonate decarboxylase.

It is found in the cytoplasm. Functionally, subunit of malonate decarboxylase, it is an acyl carrier protein to which acetyl and malonyl thioester residues are bound via a 2'-(5''-phosphoribosyl)-3'-dephospho-CoA prosthetic group and turn over during the catalytic mechanism. The protein is Malonate decarboxylase acyl carrier protein of Pseudomonas putida (strain W619).